Consider the following 479-residue polypeptide: Ribosomal RNA small subunit methyltransferase F (479 aa).

S-adenosyl-L-methionine is bound by residues 125–131 (AAAPGSK), Glu149, Asp176, and Asp194. The active-site Nucleophile is the Cys247.

The protein belongs to the class I-like SAM-binding methyltransferase superfamily. RsmB/NOP family.

The protein resides in the cytoplasm. It carries out the reaction cytidine(1407) in 16S rRNA + S-adenosyl-L-methionine = 5-methylcytidine(1407) in 16S rRNA + S-adenosyl-L-homocysteine + H(+). In terms of biological role, specifically methylates the cytosine at position 1407 (m5C1407) of 16S rRNA. In Escherichia coli O81 (strain ED1a), this protein is Ribosomal RNA small subunit methyltransferase F.